A 540-amino-acid chain; its full sequence is MALAGPSRLLALAVRLLLEPRRNLVVRGSDQSLPVVRVPRALQRRQEQRQSGRGSLQRPVLVRPGPLLVSARRPELNQPARLTLGRWERAPLASRGWKHRRSRQDHFSIERVQQEAPALRNLSSRGSFVDLGLEPRVLLALQEAVPEVVQPTSVQSKTIPPLLRGRHLLCAAETGSGKTLSYLLPLFQRLLRGSDLDSRSFTAPRGLVLVPSRELAEQVQAVAQSLGGYLGLQVIELGGGLGMSRLKLQLYRRPAADVLVATPGALWKALKSQLISLQHLNFIVLDEVDTLLDESFLELVDYILEKSPIAESPAELEDPFNPKAQLVLVGATFPEGLNQLLSKVTSPDSLTTITSSKLHCLMPHVRQTFMRLKGADKVTELVQILKQQDKASKTEPSGTVLVFCNSASTVNWLGYILDDHKIQHLRLQGQMPASMRAGIFQSFQKGSQNILVCTDIASRGLDSVHVEVVINYDFPPTLQDYIHRAGRVGRVGSEVPGSVISFVTHPWDVSLVQKIELAARRRRSLPGLASSVGDPLPQKA.

The Mitochondrial targeting signal motif lies at 3–18 (LAGPSRLLALAVRLLL). The short motif at 126 to 156 (GSFVDLGLEPRVLLALQEAVPEVVQPTSVQS) is the Q motif element. Residues 159–351 (IPPLLRGRHL…SKVTSPDSLT (193 aa)) form the Helicase ATP-binding domain. 172-179 (AETGSGKT) provides a ligand contact to ATP. The short motif at 180–191 (LSYLLPLFQRLL) is the Nuclear export signal element. The DEAD signature appears at 286 to 289 (DEVD). Positions 377-536 (KVTELVQILK…GLASSVGDPL (160 aa)) constitute a Helicase C-terminal domain. A Nuclear localization signal motif is present at residues 520 to 523 (RRRR).

Belongs to the DEAD box helicase family. As to quaternary structure, monomer. Found in a complex with GRSF1, DHX30, FASTKD2 and FASTKD5. Associates with the 16S mitochondrial rRNA (16S mt-rRNA) and with the mitochondrial ribosome large subunit (39S).

The protein localises to the nucleus. It localises to the mitochondrion. Its subcellular location is the mitochondrion matrix. The protein resides in the mitochondrion nucleoid. It carries out the reaction ATP + H2O = ADP + phosphate + H(+). Its function is as follows. Plays an essential role in facilitating the proper assembly of the mitochondrial large ribosomal subunit and its helicase activity is essential for this function. May be involved in RNA processing or transport. Has RNA and Mg(2+)-dependent ATPase activity. The protein is Probable ATP-dependent RNA helicase DDX28 (Ddx28) of Mus musculus (Mouse).